Reading from the N-terminus, the 359-residue chain is Guanine nucleotide-binding protein G(q) subunit alpha (359 aa).

Residues C9 and C10 are each lipidated (S-palmitoyl cysteine). The region spanning 38–359 is the G-alpha domain; the sequence is RELKLLLLGT…QLNLKEYNLV (322 aa). The interval 41–54 is G1 motif; sequence KLLLLGTGESGKST. 9 residues coordinate GTP: S50, G51, K52, S53, T54, S156, L180, R181, and R183. Residue S53 participates in Mg(2+) binding. The tract at residues 178–186 is G2 motif; it reads DVLRVRVPT. Mg(2+) is bound at residue T186. The segment at 201-210 is G3 motif; that stretch reads FRMVDVGGQR. Residue Q209 is modified to 5-glutamyl histamine. The interval 270–277 is G4 motif; that stretch reads ILFLNKKD. GTP contacts are provided by N274, K275, D277, and A331. Residues 329-334 are G5 motif; the sequence is TCATDT.

This sequence belongs to the G-alpha family. G(q) subfamily. G proteins are composed of 3 units; alpha, beta and gamma. The alpha chain contains the guanine nucleotide binding site. Interacts (GDP-bound form) with RIC8A (via C-terminus); promoting GNAQ folding and association with the plasma membrane. Binds NHERF1. Forms a complex with PECAM1 and BDKRB2. Interacts with GAS2L2. Post-translationally, palmitoylated by ZDHHC3 and ZDHHC7. Palmitoylation occurs in the Golgi and participates in the localization of GNAQ to the plasma membrane. In terms of processing, histaminylated at Gln-209 residues by TGM2.

It is found in the cell membrane. Its subcellular location is the golgi apparatus. The protein resides in the nucleus. The protein localises to the nucleus membrane. The enzyme catalyses GTP + H2O = GDP + phosphate + H(+). In terms of biological role, guanine nucleotide-binding proteins (G proteins) function as transducers downstream of G protein-coupled receptors (GPCRs) in numerous signaling cascades. The alpha chain contains the guanine nucleotide binding site and alternates between an active, GTP-bound state and an inactive, GDP-bound state. Signaling by an activated GPCR promotes GDP release and GTP binding. The alpha subunit has a low GTPase activity that converts bound GTP to GDP, thereby terminating the signal. Both GDP release and GTP hydrolysis are modulated by numerous regulatory proteins. Signaling is mediated via phospholipase C-beta-dependent inositol lipid hydrolysis for signal propagation: activates phospholipase C-beta: following GPCR activation, GNAQ activates PLC-beta (PLCB1, PLCB2, PLCB3 or PLCB4), leading to production of diacylglycerol (DAG) and inositol 1,4,5-trisphosphate (IP3). Required for platelet activation. Regulates B-cell selection and survival and is required to prevent B-cell-dependent autoimmunity. Regulates chemotaxis of BM-derived neutrophils and dendritic cells (in vitro). Transduces FFAR4 signaling in response to long-chain fatty acids (LCFAs). Together with GNA11, required for heart development. In Canis lupus familiaris (Dog), this protein is Guanine nucleotide-binding protein G(q) subunit alpha (GNAQ).